A 640-amino-acid polypeptide reads, in one-letter code: Zinc finger and BTB domain-containing protein 22 (640 aa).

One can recognise a BTB domain in the interval 57–121; it reads CDVSIRVQGR…AYTGRLSMAA (65 aa). Disordered stretches follow at residues 191-244, 308-327, and 332-482; these read RSHA…PVFP, PAPA…EEED, and CEDD…GGTG. Over residues 192–210 the composition is skewed to polar residues; sequence SHASSRASENQSPSSSNYF. The residue at position 203 (Ser-203) is a Phosphoserine. Acidic residues predominate over residues 318–327; sequence PDLEEDEEED. The span at 431 to 442 shows a compositional bias: low complexity; sequence SSSSSSSSSSSS. The span at 469-482 shows a compositional bias: gly residues; sequence GMPGGPGGTPGGTG. The C2H2-type 1; atypical zinc-finger motif lies at 490 to 511; it reads FLCHCGKAFSHKSMRDRHVNMH. 2 consecutive C2H2-type zinc fingers follow at residues 517-539 and 545-571; these read FDCP…MKTH and YECG…ERRH. Residues 571–640 are disordered; it reads HRLVGGGGGG…MGFGGGGGTN (70 aa). Residues 574-588 are compositionally biased toward gly residues; the sequence is VGGGGGGGPGPGGPT.

Belongs to the krueppel C2H2-type zinc-finger protein family.

It localises to the nucleus. Its function is as follows. May be involved in transcriptional regulation. This is Zinc finger and BTB domain-containing protein 22 (ZBTB22) from Canis lupus familiaris (Dog).